The sequence spans 287 residues: Neugrin (287 aa).

An N-terminal signal peptide occupies residues 1–23 (MAFSPNVLLGGRVCAAVARSGFA). The tract at residues 149–169 (SIPELPGPGDSSKPLSAGQSV) is disordered. N-linked (GlcNAc...) asparagine glycosylation is present at Asn-202.

Belongs to the neugrin family. Forms a regulatory protein-RNA complex, consisting of RCC1L, NGRN, RPUSD3, RPUSD4, TRUB2, FASTKD2 and 16S mt-rRNA. Interacts with 16S mt-rRNA; this interaction is direct.

It localises to the nucleus. It is found in the secreted. The protein resides in the mitochondrion membrane. Plays an essential role in mitochondrial ribosome biogenesis. As a component of a functional protein-RNA module, consisting of RCC1L, NGRN, RPUSD3, RPUSD4, TRUB2, FASTKD2 and 16S mitochondrial ribosomal RNA (16S mt-rRNA), controls 16S mt-rRNA abundance and is required for intra-mitochondrial translation of core subunits of the oxidative phosphorylation system. The chain is Neugrin (NGRN) from Bos taurus (Bovine).